The sequence spans 671 residues: Huntingtin-associated protein 1 (671 aa).

Disordered regions lie at residues Met1 to Pro83 and Asp258 to Gln289. Residues Pro20–Pro29 are compositionally biased toward low complexity. Residues Arg106–Pro461 form the HAP1 N-terminal domain. Residues Gln212 to Val427 are a coiled coil. The span at Asp258–Leu288 shows a compositional bias: acidic residues.

As to quaternary structure, self-associates. Interacts with HTT/huntingtin; enhanced by an expanded polyglutamine repeat within HTT. Interacts with DCTN1; decreased in presence of HTT with expanded polyglutamine repeat. Interacts with KLC2. Interacts with ITPR1 and APP. Interacts with AR; decreased by an expanded polyglutamine repeat within AR. Interacts with YWHAZ. Interacts with BDNF and SORT1; probably forming a complex involved in proBDNF trafficking, degradation and processing. Interacts with TBP, AHI1, HGS and KALRN. Interacts with KIF5A, KIF5B, KIF5C and GABRB3; indicative for an HAP1:KIF5 complex transporting a GABA(A) receptor as cargo. Interacts with ATXN3; in STBs with ATXN3 poly-Gln region with 27 repeats (normal population) and 79 repeats (spinocerebellar ataxia 3 (SCA3) patients) associating in the same strength. Interacts with NTRK2; HAP1 stabilizes association of NTRK2 with SORT1 preventing NTRK2 degradation. Interacts with CFAP263. In terms of tissue distribution, predominantly expressed in brain. Selectively expressed in neurons.

The protein resides in the cytoplasm. Its subcellular location is the cell projection. The protein localises to the axon. It is found in the presynapse. It localises to the cytoskeleton. The protein resides in the dendritic spine. Its subcellular location is the dendrite. The protein localises to the lysosome. It is found in the endoplasmic reticulum. It localises to the mitochondrion. The protein resides in the nucleus. Its subcellular location is the cytoplasmic vesicle. The protein localises to the autophagosome. It is found in the early endosome. It localises to the growth cone. The protein resides in the neuron projection. Its subcellular location is the secretory vesicle. The protein localises to the synaptic vesicle. Originally identified as neuronal protein that specifically associates with HTT/huntingtin and the binding is enhanced by an expanded polyglutamine repeat within HTT possibly affecting HAP1 interaction properties. Both HTT and HAP1 are involved in intracellular trafficking and HAP1 is proposed to link HTT to motor proteins and/or transport cargos. Seems to play a role in vesicular transport within neurons and axons such as from early endosomes to late endocytic compartments and to promote neurite outgrowth. The vesicular transport function via association with microtubule-dependent transporters can be attenuated by association with mutant HTT. Involved in the axonal transport of BDNF and its activity-dependent secretion; the function seems to involve HTT, DCTN1 and a complex with SORT1. Involved in APP trafficking and seems to facilitate APP anterograde transport and membrane insertion thereby possibly reducing processing into amyloid beta. Involved in delivery of gamma-aminobutyric acid (GABA(A)) receptors to synapses; the function is dependent on kinesin motor protein KIF5 and is disrupted by HTT with expanded polyglutamine repeat. Involved in regulation of autophagosome motility by promoting efficient retrograde axonal transport. Seems to be involved in regulation of membrane receptor recycling and degradation, and respective signal transduction, including GABA(A) receptors, tyrosine kinase receptors, EGFR, IP3 receptor and androgen receptor. Among others suggested to be involved in control of feeding behavior (involving hypothalamic GABA(A) receptors), cerebellar and brainstem development (involving AHI1 and NTRK1/TrkA), postnatal neurogenesis (involving hypothalamic NTRK2/TrkB), and ITPR1/InsP3R1-mediated Ca(2+) release (involving HTT and possibly the effect of mutant HTT). Via association with DCTN1/dynactin p150-glued and HTT/huntingtin involved in cytoplasmic retention of REST in neurons. May be involved in ciliogenesis. Involved in regulation of exocytosis. Seems to be involved in formation of cytoplasmic inclusion bodies (STBs). In case of anomalous expression of TBP, can sequester a subset of TBP into STBs; sequestration is enhanced by an expanded polyglutamine repeat within TBP. HAP1-containing STBs have been proposed to play a protective role against neurodegeneration in Huntigton disease (HD) and spinocerebellar ataxia 17 (SCA17). This Homo sapiens (Human) protein is Huntingtin-associated protein 1 (HAP1).